We begin with the raw amino-acid sequence, 278 residues long: HTH-type transcriptional activator RhaS (278 aa).

The HTH araC/xylS-type domain maps to 174 to 272 (NQLMAWLEDH…NWSPRDIRQG (99 aa)). DNA-binding regions (H-T-H motif) lie at residues 191–212 (EAVA…KQHT) and 239–262 (VTEI…RREF).

In terms of assembly, binds DNA as a dimer.

It is found in the cytoplasm. Its function is as follows. Activates expression of the rhaBAD and rhaT operons. The chain is HTH-type transcriptional activator RhaS from Salmonella enteritidis PT4 (strain P125109).